Consider the following 317-residue polypeptide: MATSLRGLDAGPGSLRRWILICFAALLLLPPRPNLGYNENYTEPVCGTPWWPDNLEESHHWPWEASLQIEDKHVCGGALIDRSWVVSAAHCIQGNKEYSVMLGSSTLHPNGSSWTLKIPVGDIIIHPKYWGRNFIRSDIALLCLETPVTFNKYVQPICLPEHNFNFKVGTKCWVTGWGQVKQHSSAQLTPAPELWEAEVFIIDNKNCDSIFHKKTLYPQVVPLIRKNMICTTNYGEDLCYGDPGGPLACEIDGRWILAGVFSWEKACATVPNLSVYTRITKYTIWIKDQVSHGAQLGPCRTSWLLLLPWLLQLPVSL.

Positions 1–35 (MATSLRGLDAGPGSLRRWILICFAALLLLPPRPNL) are cleaved as a signal peptide. Asparagine 40 is a glycosylation site (N-linked (GlcNAc...) asparagine). The Peptidase S1 domain maps to 44 to 291 (PVCGTPWWPD…YTIWIKDQVS (248 aa)). A disulfide bridge links cysteine 75 with cysteine 91. An N-linked (GlcNAc...) asparagine glycan is attached at asparagine 110. 3 cysteine pairs are disulfide-bonded: cysteine 172-cysteine 249, cysteine 207-cysteine 230, and cysteine 239-cysteine 267. Asparagine 272 is a glycosylation site (N-linked (GlcNAc...) asparagine).

This sequence belongs to the peptidase S1 family.

The protein localises to the secreted. This is Inactive serine protease 45 from Mus musculus (Mouse).